The sequence spans 253 residues: Dof zinc finger protein DOF3.4 (253 aa).

A Dof-type zinc finger spans residues Leu30–Lys84. 4 residues coordinate Zn(2+): Cys32, Cys35, Cys57, and Cys60. Residues Val73–Asn103 form a disordered region. Residues Ser90–Asn103 are compositionally biased toward low complexity.

Interacts with OBF4 or OBF5. In terms of tissue distribution, constitutively expressed in the whole plant.

It localises to the nucleus. Transcription factor that binds specifically to a 5'-AA[AG]G-3' consensus core sequence. Enhances the DNA binding of OBF transcription factors to OCS elements. This chain is Dof zinc finger protein DOF3.4 (DOF3.4), found in Arabidopsis thaliana (Mouse-ear cress).